We begin with the raw amino-acid sequence, 326 residues long: MELSRVAVALGPTGQLLLFLSFQTLAAQAADTCPEVKVVGLEGSDKLSILRGCPGLPGAAGPKGEAGANGPKGERGSPGVVGKAGPAGPKGDRGEKGARGEKGEPGQLQSCATGPRTCKELLTRGHFLSGWHTIYLPDCQPLTVLCDMDTDGGGWTVFQRRSDGSVDFYRDWAAYKRGFGSQLGEFWLGNDHIHALTAQGTSELRVDLVDFEGNHQFAKYRSFQVAGEAEKYKLVLGGFLEGNAGDSLSSHRDQFFSTKDQDNDNHSGNCAEQYHGAWWYNACHSSNLNGRYLRGLHTSYANGVNWRSGRGYNYSYQVSEMKVRLT.

The signal sequence occupies residues 1–29 (MELSRVAVALGPTGQLLLFLSFQTLAAQA). The Collagen-like domain maps to 55-93 (GLPGAAGPKGEAGANGPKGERGSPGVVGKAGPAGPKGDR). Composition is skewed to low complexity over residues 61–71 (GPKGEAGANGP) and 78–89 (PGVVGKAGPAGP). The disordered stretch occupies residues 61-110 (GPKGEAGANGPKGERGSPGVVGKAGPAGPKGDRGEKGARGEKGEPGQLQS). Positions 90–104 (KGDRGEKGARGEKGE) are enriched in basic and acidic residues. Residues 109–326 (QSCATGPRTC…QVSEMKVRLT (218 aa)) enclose the Fibrinogen C-terminal domain. 2 disulfide bridges follow: Cys111-Cys139 and Cys118-Cys146. The interval 115-154 (PRTCKELLTRGHFLSGWHTIYLPDCQPLTVLCDMDTDGGG) is a domain; contributes to trimerization. The b domain; contributes to trimerization stretch occupies residues 155–243 (WTVFQRRSDG…LVLGGFLEGN (89 aa)). Asp262 and Asp264 together coordinate Ca(2+). The N-linked (GlcNAc...) asparagine glycan is linked to Asn265. A disulfide bond links Cys270 and Cys283. Position 282 to 284 (282 to 284 (ACH)) interacts with a carbohydrate. N-linked (GlcNAc...) asparagine glycosylation occurs at Asn313. Positions 317-326 (QVSEMKVRLT) are p domain.

Belongs to the ficolin lectin family. As to quaternary structure, homotrimer. Interacts with elastin/ELN. Interacts (via Fibrinogen C-terminal domain) with FFAR2. Interacts with CRP; may regulate monocyte activation by FCN1. In terms of tissue distribution, most abundantly expressed in placenta and lung.

The protein localises to the secreted. The protein resides in the cell membrane. In terms of biological role, extracellular lectin functioning as a pattern-recognition receptor in innate immunity. Binds the sugar moieties of pathogen-associated molecular patterns (PAMPs) displayed on microbes and activates the lectin pathway of the complement system. May also activate monocytes through a G protein-coupled receptor, FFAR2, inducing the secretion of interleukin-8/IL-8. Binds preferentially to 9-O-acetylated 2-6-linked sialic acid derivatives and to various glycans containing sialic acid engaged in a 2-3 linkage. This is Ficolin-1 (FCN1) from Sus scrofa (Pig).